Consider the following 574-residue polypeptide: Iron hydrogenase 1 (574 aa).

One can recognise a 2Fe-2S ferredoxin-type domain in the interval 1 to 78 (MKTIIINGVQ…GMIINTNSDA (78 aa)). Positions 34, 46, 49, and 62 each coordinate [2Fe-2S] cluster. The 40-residue stretch at 78-117 (AVNEKIKSRISQLLDIHEFKCGPCNRRENCEFLKLVIKYK) folds into the 4Fe-4S His(Cys)3-ligated-type domain. Positions 94, 98, 101, 107, 147, 150, 153, 157, 190, 193, 196, 200, 300, 355, 499, and 503 each coordinate [4Fe-4S] cluster. 4Fe-4S ferredoxin-type domains are found at residues 138–167 (KSLT…YAMK) and 181–210 (DEKC…EKSH). Position 503 (Cys503) interacts with Fe(2+).

Monomer. The cofactor is [2Fe-2S] cluster. [4Fe-4S] cluster serves as cofactor. Fe(2+) is required as a cofactor.

It carries out the reaction H2 + 2 oxidized [2Fe-2S]-[ferredoxin] = 2 reduced [2Fe-2S]-[ferredoxin] + 2 H(+). This chain is Iron hydrogenase 1, found in Clostridium pasteurianum.